The chain runs to 647 residues: tRNA uridine 5-carboxymethylaminomethyl modification enzyme MnmG (647 aa).

Residues 22-27, Val-134, and Ser-189 each bind FAD; that span reads GAGHAG. 283–297 is a binding site for NAD(+); the sequence is GARYCPSIEDKIMRF. Residue Gln-380 coordinates FAD.

This sequence belongs to the MnmG family. In terms of assembly, homodimer. Heterotetramer of two MnmE and two MnmG subunits. FAD serves as cofactor.

It localises to the cytoplasm. In terms of biological role, NAD-binding protein involved in the addition of a carboxymethylaminomethyl (cmnm) group at the wobble position (U34) of certain tRNAs, forming tRNA-cmnm(5)s(2)U34. This is tRNA uridine 5-carboxymethylaminomethyl modification enzyme MnmG from Desulfotalea psychrophila (strain LSv54 / DSM 12343).